The chain runs to 211 residues: tRNA (guanine-N(7)-)-methyltransferase (211 aa).

Residues Glu44, Asp69, Asp96, and Asp118 each contribute to the S-adenosyl-L-methionine site. Asp118 is an active-site residue. Position 122 (Lys122) interacts with substrate. The segment at 124-129 (RHEKRR) is interaction with RNA. Residues Asp154 and 191–194 (TEYE) each bind substrate.

This sequence belongs to the class I-like SAM-binding methyltransferase superfamily. TrmB family.

The enzyme catalyses guanosine(46) in tRNA + S-adenosyl-L-methionine = N(7)-methylguanosine(46) in tRNA + S-adenosyl-L-homocysteine. It functions in the pathway tRNA modification; N(7)-methylguanine-tRNA biosynthesis. Functionally, catalyzes the formation of N(7)-methylguanine at position 46 (m7G46) in tRNA. The sequence is that of tRNA (guanine-N(7)-)-methyltransferase from Streptococcus equi subsp. equi (strain 4047).